Reading from the N-terminus, the 480-residue chain is MNFETVIGLEVHVELNTNSKIFSPTSAHFGNDQNANTNVIDWSFPGVLPVLNKGVVDAGIKAALALNMDLHKKMHFDRKNYFYPDNPKAYQISQFDEPIGYNGWIEIELEDGTTKKIGIERAHLEEDAGKNTHGTDGYSYVDLNRQGVPLIEIVSEADMRSPEEAYAYLTALKEVIQYAGISDVKMEEGSMRVDANISLRPYGQEKFGTKTELKNLNSFSNVRKGLEYEVQRQAEILRSGGQIRQETRRYDEANKTTILMRVKEGAADYRYFPEPDLPLFEISDEWIEEMRTELPEFPKERRARYVSDLGLSDYDASQLTANKVTSDFFEKAVALGGDAKQVSNWLQGEVAQFLNAEGKTLEQIELTPENLVEMITIIEDGTISSKIAKKVFVHLAKNGGGAREYVEKAGMVQISDPAILIPIIHQVFADNEAAVADFKSGKRNADKAFTGFLMKATKGQANPQVALKLLAQELAKLKEN.

This sequence belongs to the GatB/GatE family. GatB subfamily. In terms of assembly, heterotrimer of A, B and C subunits.

It catalyses the reaction L-glutamyl-tRNA(Gln) + L-glutamine + ATP + H2O = L-glutaminyl-tRNA(Gln) + L-glutamate + ADP + phosphate + H(+). It carries out the reaction L-aspartyl-tRNA(Asn) + L-glutamine + ATP + H2O = L-asparaginyl-tRNA(Asn) + L-glutamate + ADP + phosphate + 2 H(+). Allows the formation of correctly charged Asn-tRNA(Asn) or Gln-tRNA(Gln) through the transamidation of misacylated Asp-tRNA(Asn) or Glu-tRNA(Gln) in organisms which lack either or both of asparaginyl-tRNA or glutaminyl-tRNA synthetases. The reaction takes place in the presence of glutamine and ATP through an activated phospho-Asp-tRNA(Asn) or phospho-Glu-tRNA(Gln). The sequence is that of Aspartyl/glutamyl-tRNA(Asn/Gln) amidotransferase subunit B from Streptococcus pneumoniae (strain 70585).